A 2508-amino-acid polypeptide reads, in one-letter code: Male gametocyte surface protein P230p (2508 aa).

A signal peptide spans 1–34 (MFIYLFIYLFFKMDKKRTFYYLFFFFTFLVYVLY). N-linked (GlcNAc...) asparagine glycans are attached at residues N230, N254, N362, and N414. One can recognise a 6-Cys 1 domain in the interval 394-516 (KILGLSTNEK…GLGETSVDKD (123 aa)). C443 and C493 are joined by a disulfide. N601 and N674 each carry an N-linked (GlcNAc...) asparagine glycan. 5 6-Cys domains span residues 676-800 (SVSF…IVKR), 831-1096 (ITYL…LKSF), 1099-1231 (PIEG…LELN), 1268-1428 (KKHI…IPQH), and 1433-1565 (KFYG…NEDI). Residues C680 and C700 are joined by a disulfide bond. N-linked (GlcNAc...) asparagine glycosylation occurs at N703. Cystine bridges form between C714–C775 and C725–C773. 6 N-linked (GlcNAc...) asparagine glycosylation sites follow: N779, N849, N986, N995, N1065, and N1074. Cystine bridges form between C835-C856 and C871-C1072. 3 disulfides stabilise this stretch: C1103–C1129, C1144–C1206, and C1157–C1204. N1231 carries N-linked (GlcNAc...) asparagine glycosylation. 5 disulfides stabilise this stretch: C1272–C1293, C1308–C1404, C1437–C1464, C1478–C1547, and C1488–C1545. N-linked (GlcNAc...) asparagine glycosylation is present at N1385. Residues N1525, N1550, N1567, N1750, N1755, and N1788 are each glycosylated (N-linked (GlcNAc...) asparagine). 2 6-Cys domains span residues 1656–1804 (KKKI…IKKN) and 1807–1984 (KILG…IVGD). C1704 and C1782 form a disulfide bridge. Disulfide bonds link C1811/C1883, C1897/C1966, and C1908/C1964. N-linked (GlcNAc...) asparagine glycosylation is found at N2016 and N2047. The disordered stretch occupies residues 2081–2113 (SDEGDGYQADEDIGGEDDAEDVDGEGDDEDDNI). The segment covering 2082–2112 (DEGDGYQADEDIGGEDDAEDVDGEGDDEDDN) has biased composition (acidic residues). Residues N2143, N2211, N2239, and N2255 are each glycosylated (N-linked (GlcNAc...) asparagine). 6-Cys domains are found at residues 2197-2354 (IINI…VKSN) and 2357-2481 (KIYG…YEPY). Disulfide bonds link C2361–C2386, C2400–C2461, and C2411–C2459.

Its subcellular location is the cell surface. It localises to the cell membrane. Plays an essential role in male gamete fertility. Required for the binding to erythrocytes and thus, for the formation of exflagellation centers. The sequence is that of Male gametocyte surface protein P230p (PFS230P) from Plasmodium falciparum (isolate 3D7).